The primary structure comprises 127 residues: Large ribosomal subunit protein bL12 (127 aa).

Belongs to the bacterial ribosomal protein bL12 family. In terms of assembly, homodimer. Part of the ribosomal stalk of the 50S ribosomal subunit. Forms a multimeric L10(L12)X complex, where L10 forms an elongated spine to which 2 to 4 L12 dimers bind in a sequential fashion. Binds GTP-bound translation factors.

In terms of biological role, forms part of the ribosomal stalk which helps the ribosome interact with GTP-bound translation factors. Is thus essential for accurate translation. The chain is Large ribosomal subunit protein bL12 from Caulobacter vibrioides (strain ATCC 19089 / CIP 103742 / CB 15) (Caulobacter crescentus).